A 618-amino-acid polypeptide reads, in one-letter code: Dihydroxy-acid dehydratase (618 aa).

Asp-81 lines the Mg(2+) pocket. Cys-122 is a binding site for [2Fe-2S] cluster. The Mg(2+) site is built by Asp-123 and Lys-124. At Lys-124 the chain carries N6-carboxylysine. Cys-195 lines the [2Fe-2S] cluster pocket. Glu-493 contributes to the Mg(2+) binding site. Residue Ser-519 is the Proton acceptor of the active site.

This sequence belongs to the IlvD/Edd family. Homodimer. Requires [2Fe-2S] cluster as cofactor. The cofactor is Mg(2+).

The enzyme catalyses (2R)-2,3-dihydroxy-3-methylbutanoate = 3-methyl-2-oxobutanoate + H2O. It carries out the reaction (2R,3R)-2,3-dihydroxy-3-methylpentanoate = (S)-3-methyl-2-oxopentanoate + H2O. The protein operates within amino-acid biosynthesis; L-isoleucine biosynthesis; L-isoleucine from 2-oxobutanoate: step 3/4. Its pathway is amino-acid biosynthesis; L-valine biosynthesis; L-valine from pyruvate: step 3/4. Functionally, functions in the biosynthesis of branched-chain amino acids. Catalyzes the dehydration of (2R,3R)-2,3-dihydroxy-3-methylpentanoate (2,3-dihydroxy-3-methylvalerate) into 2-oxo-3-methylpentanoate (2-oxo-3-methylvalerate) and of (2R)-2,3-dihydroxy-3-methylbutanoate (2,3-dihydroxyisovalerate) into 2-oxo-3-methylbutanoate (2-oxoisovalerate), the penultimate precursor to L-isoleucine and L-valine, respectively. This chain is Dihydroxy-acid dehydratase, found in Shewanella amazonensis (strain ATCC BAA-1098 / SB2B).